Consider the following 553-residue polypeptide: Expansin-like protein 7 (553 aa).

Residues 1 to 19 form the signal peptide; it reads MRLLGSLILTLSLIASAFS. Asn-39 carries N-linked (GlcNAc...) asparagine glycosylation. An Expansin-like EG45 domain is found at 41-139; it reads SGSCEYGAYN…RKVSCDASGP (99 aa). Intrachain disulfides connect Cys-44–Cys-73 and Cys-76–Cys-134. N-linked (GlcNAc...) asparagine glycans are attached at residues Asn-276, Asn-325, and Asn-406. Disordered regions lie at residues 421-447 and 460-531; these read GGSG…SSTA and SSSA…DEHH. Low complexity-rich tracts occupy residues 460 to 476 and 484 to 493; these read SSSA…AGGK and ISTSGITGSG. Positions 497-516 are enriched in polar residues; sequence AASTSKTTSNPTGKTTGMTG. Over residues 520–531 the composition is skewed to basic and acidic residues; the sequence is DHSESHSSDEHH.

This sequence belongs to the expansin family. Expansin A subfamily.

Its subcellular location is the secreted. May serve to lubricate the movement of the cellulose microfibrils during cell growth and wall extension and/or may serve to maintain the fluid state of the slug cell wall. Overexpression shows aberrant stalk formation. The sequence is that of Expansin-like protein 7 (expl7) from Dictyostelium discoideum (Social amoeba).